The chain runs to 300 residues: Putative heme-binding peroxidase (300 aa).

Histidine 39 serves as the catalytic Proton acceptor. Disordered stretches follow at residues 44-64 and 116-135; these read YDKS…EAEG and GRTD…LPDA. The span at 116–126 shows a compositional bias: basic and acidic residues; it reads GRTDFADDSRV. Histidine 163 serves as a coordination point for heme b. Tryptophan 179 acts as the Tryptophan radical intermediate in catalysis.

It belongs to the peroxidase family. Cytochrome c peroxidase subfamily. It depends on heme b as a cofactor.

In terms of biological role, destroys radicals which are normally produced within the cells and which are toxic to biological systems. This is Putative heme-binding peroxidase from Pyricularia oryzae (strain 70-15 / ATCC MYA-4617 / FGSC 8958) (Rice blast fungus).